Consider the following 202-residue polypeptide: LexA repressor (202 aa).

The segment at residues 29–49 (VREICEATGLKSTSTVHGHLT) is a DNA-binding region (H-T-H motif). Catalysis depends on for autocatalytic cleavage activity residues S126 and K163.

It belongs to the peptidase S24 family. Homodimer.

The catalysed reaction is Hydrolysis of Ala-|-Gly bond in repressor LexA.. Represses a number of genes involved in the response to DNA damage (SOS response), including recA and lexA. In the presence of single-stranded DNA, RecA interacts with LexA causing an autocatalytic cleavage which disrupts the DNA-binding part of LexA, leading to derepression of the SOS regulon and eventually DNA repair. The sequence is that of LexA repressor from Caldicellulosiruptor saccharolyticus (strain ATCC 43494 / DSM 8903 / Tp8T 6331).